Consider the following 1183-residue polypeptide: Chromosome partition protein Smc (1183 aa).

32 to 39 (PNGCGKTN) contacts ATP. 2 coiled-coil regions span residues 167–322 (ITRY…ERLN) and 358–497 (AEFE…ALCN). The interval 409–442 (KEHLEGSVNRLDQRKRDLERSMEQAEPERRRTSE) is disordered. A compositionally biased stretch (basic and acidic residues) spans 419 to 442 (LDQRKRDLERSMEQAEPERRRTSE). Positions 523-632 (LGCLSDLISV…VADLDAAEQL (110 aa)) constitute an SMC hinge domain. Coiled coils occupy residues 669–941 (GKKA…VMER) and 980–1025 (NELA…ALEK).

This sequence belongs to the SMC family. In terms of assembly, homodimer.

Its subcellular location is the cytoplasm. Its function is as follows. Required for chromosome condensation and partitioning. In Chlorobaculum tepidum (strain ATCC 49652 / DSM 12025 / NBRC 103806 / TLS) (Chlorobium tepidum), this protein is Chromosome partition protein Smc.